Reading from the N-terminus, the 198-residue chain is Large ribosomal subunit protein bL25 (198 aa).

It belongs to the bacterial ribosomal protein bL25 family. CTC subfamily. As to quaternary structure, part of the 50S ribosomal subunit; part of the 5S rRNA/L5/L18/L25 subcomplex. Contacts the 5S rRNA. Binds to the 5S rRNA independently of L5 and L18.

This is one of the proteins that binds to the 5S RNA in the ribosome where it forms part of the central protuberance. This chain is Large ribosomal subunit protein bL25, found in Streptomyces coelicolor (strain ATCC BAA-471 / A3(2) / M145).